Here is a 456-residue protein sequence, read N- to C-terminus: N(6)-adenosine-methyltransferase non-catalytic subunit METTL14 (456 aa).

Residues 45–76 (AETRETCRASYDTSAPNAKRKYQDEGETDEDK) are disordered. Interaction with METTL3 regions lie at residues 135–136 (RD) and 237–238 (SG). A positively charged region required for RNA-binding region spans residues 245–254 (RVCLRKWGYR). 2 interaction with METTL3 regions span residues 255 to 258 (RCED) and 278 to 287 (KAVFQRTKEH). The segment at 297–298 (KR) is positively charged region required for RNA-binding. The segment at 308–312 (NVDID) is interaction with METTL3. The interval 393–456 (ERLRPKSPPP…GAHRGGFPPR (64 aa)) is disordered. Residue Ser399 is modified to Phosphoserine. The span at 409–423 (GGGAPRGGGRGGTSA) shows a compositional bias: gly residues. The span at 425-440 (RGRERNRSNFRGERGG) shows a compositional bias: basic and acidic residues. The segment covering 441 to 450 (FRGGRGGAHR) has biased composition (gly residues).

This sequence belongs to the MT-A70-like family. In terms of assembly, heterodimer; heterodimerizes with METTL3 to form an antiparallel heterodimer that constitutes an active methyltransferase. Component of the WMM complex, a N6-methyltransferase complex composed of a catalytic subcomplex, named MAC, and of an associated subcomplex, named MACOM. The MAC subcomplex is composed of METTL3 and METTL14. The MACOM subcomplex is composed of WTAP, ZC3H13, CBLL1/HAKAI, VIRMA, and, in some cases of RBM15 (RBM15 or RBM15B).

The protein localises to the nucleus. Its function is as follows. The METTL3-METTL14 heterodimer forms a N6-methyltransferase complex that methylates adenosine residues at the N(6) position of some mRNAs and regulates the circadian clock, differentiation of embryonic stem cells and cortical neurogenesis. In the heterodimer formed with METTL3, METTL14 constitutes the RNA-binding scaffold that recognizes the substrate rather than the catalytic core. N6-methyladenosine (m6A), which takes place at the 5'-[AG]GAC-3' consensus sites of some mRNAs, plays a role in mRNA stability and processing. M6A acts as a key regulator of mRNA stability by promoting mRNA destabilization and degradation. In embryonic stem cells (ESCs), m6A methylation of mRNAs encoding key naive pluripotency-promoting transcripts results in transcript destabilization. M6A regulates spermatogonial differentiation and meiosis and is essential for male fertility and spermatogenesis. M6A also regulates cortical neurogenesis: m6A methylation of transcripts related to transcription factors, neural stem cells, the cell cycle and neuronal differentiation during brain development promotes their destabilization and decay, promoting differentiation of radial glial cells. The chain is N(6)-adenosine-methyltransferase non-catalytic subunit METTL14 (METTL14) from Bos taurus (Bovine).